Consider the following 119-residue polypeptide: Large ribosomal subunit protein uL22 (119 aa).

It belongs to the universal ribosomal protein uL22 family. As to quaternary structure, part of the 50S ribosomal subunit.

In terms of biological role, this protein binds specifically to 23S rRNA; its binding is stimulated by other ribosomal proteins, e.g. L4, L17, and L20. It is important during the early stages of 50S assembly. It makes multiple contacts with different domains of the 23S rRNA in the assembled 50S subunit and ribosome. Its function is as follows. The globular domain of the protein is located near the polypeptide exit tunnel on the outside of the subunit, while an extended beta-hairpin is found that lines the wall of the exit tunnel in the center of the 70S ribosome. The chain is Large ribosomal subunit protein uL22 from Rickettsia felis (strain ATCC VR-1525 / URRWXCal2) (Rickettsia azadi).